The chain runs to 197 residues: Beta-crystallin A2 (197 aa).

An N-terminal arm region spans residues 1–11 (MSGTLSQGSSP). 2 Beta/gamma crystallin 'Greek key' domains span residues 12–52 (ARLT…KVES) and 53–99 (GAWV…RPLL). Residues 100–105 (CANHSD) are connecting peptide. 2 Beta/gamma crystallin 'Greek key' domains span residues 106-147 (SRVT…KVTS) and 148-196 (GAWV…RRVQ).

Belongs to the beta/gamma-crystallin family. In terms of assembly, homo/heterodimer, or complexes of higher-order. The structure of beta-crystallin oligomers seems to be stabilized through interactions between the N-terminal arms.

In terms of biological role, crystallins are the dominant structural components of the vertebrate eye lens. This chain is Beta-crystallin A2 (CRYBA2), found in Macropus fuliginosus (Western gray kangaroo).